Consider the following 290-residue polypeptide: Isopentenyl-diphosphate Delta-isomerase II (290 aa).

One can recognise a Nudix hydrolase domain in the interval 108–260; sequence MLHRAFTVFL…GLKLSPWFRL (153 aa). Catalysis depends on residues cysteine 145 and glutamate 207.

Belongs to the IPP isomerase type 1 family.

It catalyses the reaction isopentenyl diphosphate = dimethylallyl diphosphate. It functions in the pathway isoprenoid biosynthesis; dimethylallyl diphosphate biosynthesis; dimethylallyl diphosphate from isopentenyl diphosphate: step 1/1. The protein operates within porphyrin-containing compound metabolism; chlorophyll biosynthesis. Functionally, catalyzes the 1,3-allylic rearrangement of the homoallylic substrate isopentenyl (IPP) to its highly electrophilic allylic isomer, dimethylallyl diphosphate (DMAPP). The sequence is that of Isopentenyl-diphosphate Delta-isomerase II (IPI2) from Clarkia xantiana (Gunsight clarkia).